The chain runs to 243 residues: Probable transcriptional regulatory protein LGAS_1276 (243 aa).

The tract at residues 1 to 22 (MSGHSKWHNIQGRKNAQDAKRG) is disordered.

The protein belongs to the TACO1 family.

It localises to the cytoplasm. The chain is Probable transcriptional regulatory protein LGAS_1276 from Lactobacillus gasseri (strain ATCC 33323 / DSM 20243 / BCRC 14619 / CIP 102991 / JCM 1131 / KCTC 3163 / NCIMB 11718 / NCTC 13722 / AM63).